Reading from the N-terminus, the 416-residue chain is Protein MID1-COMPLEMENTING ACTIVITY 2 (416 aa).

The stretch at 191-219 (CEALKTEEEKLQLELQRSRARYDADQCEV) forms a coiled coil. The helical transmembrane segment at 338 to 354 (LIVYSLILSCCCYTCCI) threads the bilayer.

In terms of tissue distribution, expressed in roots, leaves, stems, flowers and siliques. In the root, high levels of expression in vascular tissues, in the stele and endodermis, but no expression in the cortex, epidermis, root cap, promeristem and adjacent elongation zone of the primary root. Not expressed in root hairs. Detected in shoot apical meristem, leaf mesophyll cells and vascular tissues, upper half of inflorescence, but not in petioles of rosette leaves.

Its subcellular location is the cell membrane. Inhibited by GdCl(3), but not by verapamil. In terms of biological role, calcium-permeable stretch-activated channel component. Probably involved in mechanosensing and in mechano-stimulated calcium uptake mechanism. This Arabidopsis thaliana (Mouse-ear cress) protein is Protein MID1-COMPLEMENTING ACTIVITY 2 (MCA2).